We begin with the raw amino-acid sequence, 212 residues long: Cytidylate kinase (212 aa).

11-19 (GPAASGKGT) serves as a coordination point for ATP. The disordered stretch occupies residues 50 to 69 (GGDPADPAASEEQARSLSRL).

This sequence belongs to the cytidylate kinase family. Type 1 subfamily.

The protein resides in the cytoplasm. The enzyme catalyses CMP + ATP = CDP + ADP. It carries out the reaction dCMP + ATP = dCDP + ADP. The protein is Cytidylate kinase of Acidiphilium cryptum (strain JF-5).